The following is a 243-amino-acid chain: Ribosomal RNA small subunit methyltransferase J (243 aa).

S-adenosyl-L-methionine is bound by residues 112 to 113 and Asp-164; that span reads ER.

It belongs to the methyltransferase superfamily. RsmJ family.

Its subcellular location is the cytoplasm. The catalysed reaction is guanosine(1516) in 16S rRNA + S-adenosyl-L-methionine = N(2)-methylguanosine(1516) in 16S rRNA + S-adenosyl-L-homocysteine + H(+). In terms of biological role, specifically methylates the guanosine in position 1516 of 16S rRNA. The sequence is that of Ribosomal RNA small subunit methyltransferase J from Legionella pneumophila subsp. pneumophila (strain Philadelphia 1 / ATCC 33152 / DSM 7513).